The following is a 127-amino-acid chain: Glycine cleavage system H protein (127 aa).

A Lipoyl-binding domain is found at 22 to 104 (KARIGITHFA…YEKAWMIVVE (83 aa)). Lysine 63 carries the post-translational modification N6-lipoyllysine.

The protein belongs to the GcvH family. As to quaternary structure, the glycine cleavage system is composed of four proteins: P, T, L and H. (R)-lipoate is required as a cofactor.

Functionally, the glycine cleavage system catalyzes the degradation of glycine. The H protein shuttles the methylamine group of glycine from the P protein to the T protein. In terms of biological role, is also involved in protein lipoylation via its role as an octanoyl/lipoyl carrier protein intermediate. The polypeptide is Glycine cleavage system H protein (Bacillus subtilis (strain 168)).